A 1656-amino-acid chain; its full sequence is Probable phospholipid-transporting ATPase DNF3 (1656 aa).

The Lumenal portion of the chain corresponds to 1–164; sequence MGIADGQRRR…PRQLYAQFSK (164 aa). Residues 36-74 are disordered; the sequence is ELEDINESKTFSGSDNNDKDDRDETSGNYAAEEDYEMEE. Residues 51–60 show a composition bias toward basic and acidic residues; that stretch reads NNDKDDRDET. The chain crosses the membrane as a helical span at residues 165–185; the sequence is LANTYFFIVAVLQMIPGWSTT. The Cytoplasmic segment spans residues 186–451; the sequence is GTYTTIIPLC…RTKAPKLQRK (266 aa). The chain crosses the membrane as a helical span at residues 452 to 472; that stretch reads INMIIVFMVFVVATISLFSYL. The Lumenal segment spans residues 473–495; sequence GHVLHKKKYIDQNKAWYLFQADA. Residues 496-516 traverse the membrane as a helical segment; the sequence is GVAPTIMSFIIMYNTVIPLSL. Topologically, residues 517-1157 are cytoplasmic; that stretch reads YVTMEIIKVV…ISKMNAVSQE (641 aa). Asp-566 acts as the 4-aspartylphosphate intermediate in catalysis. ATP-binding residues include Asp-566, Lys-567, and Thr-568. Asp-566 serves as a coordination point for Mg(2+). Residue Thr-568 participates in Mg(2+) binding. Ser-627 is subject to Phosphoserine. ATP contacts are provided by residues Glu-765, Phe-813, Ser-815, Lys-818, Lys-838, Arg-1034, Thr-1035, Thr-1114, Gly-1115, Asp-1116, 1167-1174, Arg-1202, and Lys-1208; that span reads VVVIDGAT. A helical membrane pass occupies residues 1158–1178; the sequence is VDSGNIAHCVVVIDGATMAMF. The Lumenal portion of the chain corresponds to 1179–1318; that stretch reads EGNPTYMSVF…MFSGSSLYEP (140 aa). Residue Asp-1229 coordinates Mg(2+). Residues Asn-1232 and Asp-1233 each coordinate ATP. Residues 1319–1339 form a helical membrane-spanning segment; that stretch reads WSLSMFNTLFTSLPVLCIGMF. The Cytoplasmic portion of the chain corresponds to 1340 to 1365; it reads EKDLKPMTLLTVPELYSYGRLSQGFN. The chain crosses the membrane as a helical span at residues 1366-1386; it reads WLIFMEWVILATTNSLIITFL. The Lumenal segment spans residues 1387–1395; the sequence is NVVMWGMSS. A helical transmembrane segment spans residues 1396 to 1416; the sequence is LSDNTMYPLGLINFTAIVALI. Residues 1417–1432 are Cytoplasmic-facing; the sequence is NVKSQFVEMHNRNWLA. The chain crosses the membrane as a helical span at residues 1433 to 1453; that stretch reads FTSVVLSCGGWLVWCCALPIL. The Lumenal portion of the chain corresponds to 1454 to 1473; that stretch reads NNTDQIYDVAYGFYNHFGKD. The helical transmembrane segment at 1474–1494 threads the bilayer; the sequence is ITFWCTSLVLALLPITLDIVY. Residues 1495–1656 lie on the Cytoplasmic side of the membrane; that stretch reads KTFKVMIWPS…IIQARLKDLE (162 aa). Positions 1554–1576 are disordered; sequence PRTNSRASAKTHNSSIYSMSNGN.

It belongs to the cation transport ATPase (P-type) (TC 3.A.3) family. Type IV subfamily. As to quaternary structure, component of a flippase complex consisting of DNF3 and YNR048W/CRF1. Interacts with YNR048W/CRF1; the interaction is direct and required for proper expression and endoplasmic reticulum (ER) export of either partner. Mg(2+) serves as cofactor.

It is found in the golgi apparatus. The protein resides in the trans-Golgi network membrane. It localises to the endosome membrane. It carries out the reaction ATP + H2O + phospholipidSide 1 = ADP + phosphate + phospholipidSide 2.. The catalysed reaction is a 1,2-diacyl-sn-glycero-3-phosphocholine(out) + ATP + H2O = a 1,2-diacyl-sn-glycero-3-phosphocholine(in) + ADP + phosphate + H(+). The enzyme catalyses a 1,2-diacyl-sn-glycero-3-phosphoethanolamine(out) + ATP + H2O = a 1,2-diacyl-sn-glycero-3-phosphoethanolamine(in) + ADP + phosphate + H(+). Its function is as follows. Catalytic component of a P4-ATPase flippase complex which catalyzes the hydrolysis of ATP coupled to the transport of phosphatidylcholine and small amounts of phosphatidylethanolamine from the lumen to the cytosolic leaflet of the trans-Golgi network and ensures the maintenance of asymmetric distribution of phospholipids. May be involved in transport from early endosomes to the trans-Golgi network (TGN). In Saccharomyces cerevisiae (strain ATCC 204508 / S288c) (Baker's yeast), this protein is Probable phospholipid-transporting ATPase DNF3 (DNF3).